The following is a 367-amino-acid chain: Dual specificity protein phosphatase 1 (367 aa).

The region spanning 20 to 137 is the Rhodanese domain; it reads GAAQCLLLDC…FSASCPELCS (118 aa). A Tyrosine-protein phosphatase domain is found at 173-314; that stretch reads GPVEILSFLY…LLQFESQVLA (142 aa). C258 acts as the Phosphocysteine intermediate in catalysis. 2 positions are modified to phosphoserine; by MAPK1 and MAPK3: S359 and S364.

It belongs to the protein-tyrosine phosphatase family. Non-receptor class dual specificity subfamily. Post-translationally, phosphorylation at Ser-359 and Ser-364 by MAPK1/ERK2 and MAPK3/ERK1 reduces its rate of degradation. 'Lys-48'-linked polyubiquitinated by NEURL3, leading to proteasomal degradation.

It is found in the nucleus. The catalysed reaction is O-phospho-L-tyrosyl-[protein] + H2O = L-tyrosyl-[protein] + phosphate. It catalyses the reaction O-phospho-L-seryl-[protein] + H2O = L-seryl-[protein] + phosphate. It carries out the reaction O-phospho-L-threonyl-[protein] + H2O = L-threonyl-[protein] + phosphate. Its function is as follows. Dual specificity phosphatase that dephosphorylates MAP kinase MAPK1/ERK2 on both 'Thr-183' and 'Tyr-185', regulating its activity during the meiotic cell cycle. The chain is Dual specificity protein phosphatase 1 from Mus musculus (Mouse).